A 214-amino-acid polypeptide reads, in one-letter code: Adenylate kinase (214 aa).

10-15 contacts ATP; it reads GAGKGT. Residues 30-59 form an NMP region; it reads STGDMLRAAVKAGTPLGLEAKKVMDAGQLV. AMP is bound by residues T31, R36, 57–59, 85–88, and Q92; these read QLV and GFPR. Residues 122 to 159 are LID; that stretch reads GRRVHPGSGRVYHVVFNPPKVEGKDDVTGEDLAIRPDD. ATP-binding positions include R123 and 132-133; that span reads VY. AMP contacts are provided by R156 and R167. ATP is bound at residue Q200.

Belongs to the adenylate kinase family. As to quaternary structure, monomer.

Its subcellular location is the cytoplasm. It carries out the reaction AMP + ATP = 2 ADP. It participates in purine metabolism; AMP biosynthesis via salvage pathway; AMP from ADP: step 1/1. Its function is as follows. Catalyzes the reversible transfer of the terminal phosphate group between ATP and AMP. Plays an important role in cellular energy homeostasis and in adenine nucleotide metabolism. This chain is Adenylate kinase, found in Shewanella oneidensis (strain ATCC 700550 / JCM 31522 / CIP 106686 / LMG 19005 / NCIMB 14063 / MR-1).